The chain runs to 469 residues: 3-isopropylmalate dehydratase large subunit (469 aa).

C350, C410, and C413 together coordinate [4Fe-4S] cluster.

The protein belongs to the aconitase/IPM isomerase family. LeuC type 1 subfamily. In terms of assembly, heterodimer of LeuC and LeuD. [4Fe-4S] cluster serves as cofactor.

It catalyses the reaction (2R,3S)-3-isopropylmalate = (2S)-2-isopropylmalate. Its pathway is amino-acid biosynthesis; L-leucine biosynthesis; L-leucine from 3-methyl-2-oxobutanoate: step 2/4. In terms of biological role, catalyzes the isomerization between 2-isopropylmalate and 3-isopropylmalate, via the formation of 2-isopropylmaleate. This is 3-isopropylmalate dehydratase large subunit from Rhizobium etli (strain ATCC 51251 / DSM 11541 / JCM 21823 / NBRC 15573 / CFN 42).